A 443-amino-acid polypeptide reads, in one-letter code: MHDIKSIRDNPQAFDAGLARRGLKPLSASLLAIDERRRAAILASEQAQARRNAASKEIGDAKKAKDEARAATLMAEVAELKTTMPQLEAAAKAADEELTKELSAIPNIPFDEVPDGVDEHGNVQHHVFGNKRNYGFAPKLHDDLGNALGYMDFEAAAKLSGARFVVLKKGLARLERAIGQFMLDLHTTEHGYTEINPPLLVRNEVMFGTGQLPKFEDDQFWAIKGELLASPDHERLKTERLGLIPTAEVSLTNLARESILDEKQLPMRLTALTPCFRAEAGAAGRDTRGMIRQHQFTKVELVSITTPEASKDELERMLSCAEQVLQKLDLHYRVMTLCAGDMGFSSQKTYDIEVWMPGQGDGGMFREISSCSVCGDFQARRMDARSRGPDGKPRFVHTLNGSGTAVGRALIAVMETYQQEDGSIAVPSVLQPYMGGLKVISRD.

246-248 (TAE) is a binding site for L-serine. An ATP-binding site is contributed by 277-279 (RAE). Glu-300 is a binding site for L-serine. 367–370 (EISS) lines the ATP pocket. Residue Ser-402 coordinates L-serine.

The protein belongs to the class-II aminoacyl-tRNA synthetase family. Type-1 seryl-tRNA synthetase subfamily. As to quaternary structure, homodimer. The tRNA molecule binds across the dimer.

It localises to the cytoplasm. The enzyme catalyses tRNA(Ser) + L-serine + ATP = L-seryl-tRNA(Ser) + AMP + diphosphate + H(+). The catalysed reaction is tRNA(Sec) + L-serine + ATP = L-seryl-tRNA(Sec) + AMP + diphosphate + H(+). The protein operates within aminoacyl-tRNA biosynthesis; selenocysteinyl-tRNA(Sec) biosynthesis; L-seryl-tRNA(Sec) from L-serine and tRNA(Sec): step 1/1. Functionally, catalyzes the attachment of serine to tRNA(Ser). Is also able to aminoacylate tRNA(Sec) with serine, to form the misacylated tRNA L-seryl-tRNA(Sec), which will be further converted into selenocysteinyl-tRNA(Sec). The polypeptide is Serine--tRNA ligase (Bradyrhizobium diazoefficiens (strain JCM 10833 / BCRC 13528 / IAM 13628 / NBRC 14792 / USDA 110)).